Reading from the N-terminus, the 460-residue chain is MLRWLIGGGREPQGLAEKAALQTIGEDQGQNPYTELLVLEAHRDIVRFLVRLDDFRFASAGDDGIIVVWNAQTGEKLLELRGHTQKITAVIAFPPLDSCEASSQLLLTASADRTVGVWDCDTGRQIQRVTCFQSTVKCLTVLQRLDIWLSGGSDLGVWNRKLDLLCKTSHLSDTGISALVEIPGNCVAAAVGRELIIFRLVTPTEELPEWDIIEVKRLLDHQDNILSLANINDTGFVTGSHVGELLIWDALDWTVQACERTFWSPTAQLDAQQEIKLFQKQNDISINHFTCDEENIFAAVGRGLYVYNLQLKRVIACQKTAHDSNILHIDKLPNRQLISCSEDGAVRMWEVREKQQLAAEPVPTGFFNMWGFGRVNKQASQPVKKQEENVTTCSLELIGDLIGHSSSVEMFLYFEDHGLVTCSADHLIILWKNGERESGVRSLKLFQKLEENGDLYPESP.

WD repeat units follow at residues 40 to 79 (EAHR…KLLE), 82 to 128 (GHTQ…QIQR), 131 to 168 (CFQS…LCKT), 220 to 258 (DHQD…VQAC), 321 to 359 (AHDS…QLAA), and 403 to 441 (GHSS…SGVR).

In terms of assembly, component of the C9orf72-SMCR8 complex, at least composed of C9orf72, SMCR8 and WDR41. The complex is formed of two protomers, each individually consisting of one molecule each of C9orf72, SMCR8 and WDR41. The protomers homodimerize via an interaction between C9orf72 (via C-terminus) and SMCR8 (via N-terminus). Within each protomer SMCR8 (via DENN domain) acts as a bridging protein between WDR41 (via C-terminus and N-terminus) and C9orf72 (via C-terminus). The C9orf72-SMCR8 complex associates with the ULK1/ATG1 kinase complex.

Its subcellular location is the cytoplasm. Its function is as follows. Non-catalytic component of the C9orf72-SMCR8 complex, a complex that has guanine nucleotide exchange factor (GEF) activity and regulates autophagy. The C9orf72-SMCR8 complex promotes the exchange of GDP to GTP, converting inactive GDP-bound RAB8A and RAB39B into their active GTP-bound form, thereby promoting autophagosome maturation. As part of the C9orf72-SMCR8 complex, stimulates RAB8A and RAB11A GTPase activity in vitro, however WDR42 is shown not be an essential complex component for this function. The C9orf72-SMCR8 complex also acts as a negative regulator of autophagy initiation by interacting with the ULK1/ATG1 kinase complex and inhibiting its protein kinase activity. The polypeptide is WD repeat-containing protein 41 (Mus musculus (Mouse)).